The sequence spans 347 residues: D-alanine--D-alanine ligase (347 aa).

Residues 131–333 form the ATP-grasp domain; sequence KRVLESAGIA…YPELIERLVD (203 aa). Residue 161-216 coordinates ATP; it reads EEKLAYPVFTKPSNMGSSVGISKSENQEELRQALELAFRYDSRVLVEQGVNAREIE. Residues Asp-287, Glu-300, and Asn-302 each contribute to the Mg(2+) site.

This sequence belongs to the D-alanine--D-alanine ligase family. It depends on Mg(2+) as a cofactor. The cofactor is Mn(2+).

Its subcellular location is the cytoplasm. It catalyses the reaction 2 D-alanine + ATP = D-alanyl-D-alanine + ADP + phosphate + H(+). It functions in the pathway cell wall biogenesis; peptidoglycan biosynthesis. Cell wall formation. The protein is D-alanine--D-alanine ligase of Streptococcus pneumoniae (strain CGSP14).